The following is a 36-amino-acid chain: Protein YmgL (36 aa).

This is Protein YmgL from Escherichia coli (strain K12).